The following is a 310-amino-acid chain: Probable metallo-hydrolase Mb2322c (310 aa).

A disordered region spans residues 1–29 (MVATRGRPCPTNFSRPQRPRVAGNGTKSQ). The Zn(2+) site is built by H137, D139, D141, H142, H221, D242, and H288.

This sequence belongs to the metallo-beta-lactamase superfamily. It depends on Zn(2+) as a cofactor.

The protein is Probable metallo-hydrolase Mb2322c of Mycobacterium bovis (strain ATCC BAA-935 / AF2122/97).